We begin with the raw amino-acid sequence, 571 residues long: MARLRGAGAAGRCRPGRFGSSARRHGLADDGEPDRVLPARRRCSARRRHLVFGVQHPARRAADLRVRQRGDQGGHLRATVRRSRSRQRCAHRTHRLRRWRAPGTLSLTDLYAAASGDFFDFESTWRAVQPEDIVTLIYTSGTTGNPKGVEMTHANLLFEGYAIDEVLGIRFGDRVTSFLPSAHIADRMTGLYLQEMFGTQVTAVADARTIAAALPDVRPTVWGAVPRVWEKLKAGIEFTVARETDEMKRQALAWAMSVAGKRANALLAGESMSDQLVAEWAKADELVLSKLRERLGFGELRWALSGAAPIPKETLAFFAGIGIPIAEIWGMSELSCVATASHPRDGRLGTVGKLLPGLQGKIAEDGEYLVRGPLVMKGYRKEPAKTAEAIDSDGWLHTGDVFDIDSDGYLRVVDRKKELIINAAGKNMSPANIENTILAACPMVGVMMAIGDGRTYNTALLVFDADSLGPYAAQRGLDASPAALAADPEVIARIAAGVAEGNAKLSRVEQIKRFRILPTLWEPGGDEITLTMKLKRRRIAAKYSAEIEELYASELRPQVYEPAAVPSTQPA.

The segment covering 1–19 (MARLRGAGAAGRCRPGRFG) has biased composition (low complexity). Disordered stretches follow at residues 1 to 35 (MARL…EPDR) and 67 to 91 (RQRG…RCAH). The segment covering 78–91 (ATVRRSRSRQRCAH) has biased composition (basic residues). Helical transmembrane passes span 314-334 (TLAF…MSEL) and 431-451 (ANIE…MAIG).

The protein belongs to the ATP-dependent AMP-binding enzyme family.

The protein localises to the cell membrane. The protein is Putative fatty-acid--CoA ligase fadD11 (fadD11) of Mycobacterium tuberculosis (strain CDC 1551 / Oshkosh).